Here is a 326-residue protein sequence, read N- to C-terminus: Aspartate carbamoyltransferase catalytic subunit (326 aa).

Residues arginine 58 and threonine 59 each coordinate carbamoyl phosphate. Lysine 86 provides a ligand contact to L-aspartate. Arginine 108, histidine 141, and glutamine 144 together coordinate carbamoyl phosphate. Arginine 181 and arginine 239 together coordinate L-aspartate. Glycine 280 and proline 281 together coordinate carbamoyl phosphate.

Belongs to the aspartate/ornithine carbamoyltransferase superfamily. ATCase family. In terms of assembly, heterododecamer (2C3:3R2) of six catalytic PyrB chains organized as two trimers (C3), and six regulatory PyrI chains organized as three dimers (R2).

The enzyme catalyses carbamoyl phosphate + L-aspartate = N-carbamoyl-L-aspartate + phosphate + H(+). It participates in pyrimidine metabolism; UMP biosynthesis via de novo pathway; (S)-dihydroorotate from bicarbonate: step 2/3. Its function is as follows. Catalyzes the condensation of carbamoyl phosphate and aspartate to form carbamoyl aspartate and inorganic phosphate, the committed step in the de novo pyrimidine nucleotide biosynthesis pathway. This is Aspartate carbamoyltransferase catalytic subunit from Synechococcus sp. (strain JA-3-3Ab) (Cyanobacteria bacterium Yellowstone A-Prime).